The chain runs to 146 residues: UPF0756 membrane protein PTH_1817 (146 aa).

4 consecutive transmembrane segments (helical) span residues 6-26 (LLIG…ILLI), 46-66 (MGLT…KASW), 69-89 (IISS…ALAT), and 105-125 (IVFG…GIPV).

This sequence belongs to the UPF0756 family.

It is found in the cell membrane. The chain is UPF0756 membrane protein PTH_1817 from Pelotomaculum thermopropionicum (strain DSM 13744 / JCM 10971 / SI).